The following is a 242-amino-acid chain: Basic agglutinin (242 aa).

Asn-45 and Asn-220 each carry an N-linked (GlcNAc...) asparagine glycan.

It belongs to the leguminous lectin family.

Its function is as follows. Lectin. This is Basic agglutinin (WBAI) from Psophocarpus tetragonolobus (Winged bean).